The chain runs to 270 residues: Endonuclease 4 (270 aa).

His69, His108, Glu139, Asp169, His172, His204, Asp217, His219, and Glu248 together coordinate Zn(2+).

Belongs to the AP endonuclease 2 family. Zn(2+) serves as cofactor.

It catalyses the reaction Endonucleolytic cleavage to 5'-phosphooligonucleotide end-products.. In terms of biological role, endonuclease IV plays a role in DNA repair. It cleaves phosphodiester bonds at apurinic or apyrimidinic (AP) sites, generating a 3'-hydroxyl group and a 5'-terminal sugar phosphate. In addition, possesses a 3'-5' exonuclease activity. In Thermus thermophilus (strain ATCC BAA-163 / DSM 7039 / HB27), this protein is Endonuclease 4.